We begin with the raw amino-acid sequence, 801 residues long: Phenylalanine--tRNA ligase beta subunit (801 aa).

The region spanning 39–147 (GGGLDQVVVA…SDLPLGVPLF (109 aa)) is the tRNA-binding domain. One can recognise a B5 domain in the interval 401 to 477 (VSHRTIRFRV…RLNGYDRIET (77 aa)). 4 residues coordinate Mg(2+): Asp-455, Asp-461, Glu-464, and Glu-465. Residues 708–801 (SRFPDTFRDI…LVAKLGATIR (94 aa)) enclose the FDX-ACB domain.

The protein belongs to the phenylalanyl-tRNA synthetase beta subunit family. Type 1 subfamily. In terms of assembly, tetramer of two alpha and two beta subunits. The cofactor is Mg(2+).

Its subcellular location is the cytoplasm. The catalysed reaction is tRNA(Phe) + L-phenylalanine + ATP = L-phenylalanyl-tRNA(Phe) + AMP + diphosphate + H(+). This chain is Phenylalanine--tRNA ligase beta subunit, found in Geobacter sulfurreducens (strain ATCC 51573 / DSM 12127 / PCA).